Here is a 397-residue protein sequence, read N- to C-terminus: G2/mitotic-specific cyclin-B2 (397 aa).

Disordered stretches follow at residues 1–20 (MALL…DTGV) and 64–97 (KVTH…PEDV). Thr-8 is subject to Phosphothreonine. Residue Ser-11 is modified to Phosphoserine. A compositionally biased stretch (polar residues) spans 64–74 (KVTHVNKQPKP). 3 positions are modified to phosphoserine: Ser-77, Ser-98, and Ser-391.

It belongs to the cyclin family. Cyclin AB subfamily. In terms of assembly, interacts with the CDK1 protein kinase to form a serine/threonine kinase holoenzyme complex also known as maturation promoting factor (MPF). The cyclin subunit imparts substrate specificity to the complex.

Its function is as follows. Essential for the control of the cell cycle at the G2/M (mitosis) transition. The protein is G2/mitotic-specific cyclin-B2 (CCNB2) of Mesocricetus auratus (Golden hamster).